The sequence spans 345 residues: MEDDGQSSVAETLDPALQKKHHDMLERLSARHQARKSDSPDSSSSSSSTLESTSSFLAKFSDSKRSIESRIAESRLASSSTDSSKLKSDLAEISVAIDNLEKLLAENSYFLPSYEVRSSLKIVSDLKQSLDILSGELVPKKKFSFKSKSTTKKPESKLPEIQKPDVVLPPKLVPVRDSPGLRNKHGETLVKSFEGSSIGEFTLSDLDSCQVKLTGTVNALFLHRLKKCSVYTGPVIGSILIDDVEDCVLVLASHQIRIHCARKSDFYLRVRSRPIIEDSNGVRFAPYCLDYKGIDEDLKTAGLEEETNNWANVDDFRWLRAVQSPNWSLLPEEERVSLLTISGDS.

Met1 is modified (N-acetylmethionine). Over residues 1 to 10 (MEDDGQSSVA) the composition is skewed to polar residues. Residues 1 to 83 (MEDDGQSSVA…SRLASSSTDS (83 aa)) form a disordered region. The span at 23–39 (DMLERLSARHQARKSDS) shows a compositional bias: basic and acidic residues. Residues 40-55 (PDSSSSSSSTLESTSS) show a composition bias toward low complexity. Residues 61–73 (SDSKRSIESRIAE) show a composition bias toward basic and acidic residues. The segment covering 74–83 (SRLASSSTDS) has biased composition (low complexity). Residues 169-318 (PPKLVPVRDS…NWANVDDFRW (150 aa)) enclose the C-CAP/cofactor C-like domain.

The protein belongs to the TBCC family. Supercomplex made of cofactors A to E. Cofactors A and D function by capturing and stabilizing tubulin in a quasi-native conformation. Cofactor E binds to the cofactor D-tubulin complex; interaction with cofactor C then causes the release of tubulin polypeptides that are committed to the native state. As to expression, ubiquitously expressed (at protein level). Present in leaves, roots, flowers, and stems.

It is found in the cytoplasm. Functionally, essential tubulin-folding protein involved in the final step of the tubulin folding pathway. Required for continuous microtubule cytoskeleton organization, mitotic division, cytokinesis, and to couple cell cycle progression to cell division in embryos and endosperms. Not essential for cell viability. Binds probably to the multimeric supercomplex, stimulating GTP hydrolysis by the bound beta-tubulin and the release of the alpha-/beta-tubulin heterodimer. The chain is Tubulin-folding cofactor C (TFCC) from Arabidopsis thaliana (Mouse-ear cress).